Consider the following 1034-residue polypeptide: FERM domain-containing protein 4B (1034 aa).

The FERM domain occupies 59–361 (RHCQVHLLDD…SQHQFYLDRK (303 aa)). Position 372 is a phosphoserine (Ser-372). Coiled-coil stretches lie at residues 417–450 (EVSEEQKREKILELKKKEKLLQEKLLKKVEELKK) and 531–561 (KKKRKQDYTDAMKKLQEIENAINEYRIRCGK). Residues 542-971 (MKKLQEIENA…TQLTIGLSDY (430 aa)) are necessary for adherens junction and tight junction localization. A compositionally biased stretch (low complexity) spans 576 to 589 (PSESSSLSDTTTYD). Disordered stretches follow at residues 576-614 (PSESSSLSDTTTYDDPSDAFTFPGQRSSSVPHSPRILPP), 635-698 (DTRQ…LESQ), 712-735 (FSLSKSQRSSSTEILDDGSSYTSQ), and 752-786 (TTQTLDTRTRGRRRSKKQNVSTSNSGSMPNLAQKD). Ser-608 bears the Phosphoserine mark. 2 stretches are compositionally biased toward polar residues: residues 635–650 (DTRQSREMLSTHSSPY) and 663–674 (MPTTPVLTRNAY). Residues 675–685 (SSSHLEPESSS) are compositionally biased toward low complexity. At Ser-697 the chain carries Phosphoserine. Positions 713–722 (SLSKSQRSSS) are enriched in low complexity. A compositionally biased stretch (polar residues) spans 769-781 (QNVSTSNSGSMPN). A Glycyl lysine isopeptide (Lys-Gly) (interchain with G-Cter in SUMO2) cross-link involves residue Lys-882. Disordered regions lie at residues 905–925 (RASGQKDQGHSPQTSFDSDRG) and 1004–1034 (DGTDGNQLEDNLESSEQRLFWHEDSKPGTLV). Residues 906–920 (ASGQKDQGHSPQTSF) are compositionally biased toward polar residues. Phosphoserine is present on Ser-915. A compositionally biased stretch (basic and acidic residues) spans 1018–1034 (SEQRLFWHEDSKPGTLV). A Glycyl lysine isopeptide (Lys-Gly) (interchain with G-Cter in SUMO2) cross-link involves residue Lys-1029.

As to quaternary structure, interacts with CYTH3. Interacts with PARD3. Interacts with CYTH1.

The protein resides in the cytoplasm. It is found in the cytoskeleton. The protein localises to the cell junction. It localises to the tight junction. Its subcellular location is the adherens junction. Member of GRP1 signaling complexes that are acutely recruited to plasma membrane ruffles in response to insulin receptor signaling. May function as a scaffolding protein that regulates epithelial cell polarity by connecting ARF6 activation with the PAR3 complex. Plays a redundant role with FRMD4A in epithelial polarization. This is FERM domain-containing protein 4B from Homo sapiens (Human).